Reading from the N-terminus, the 136-residue chain is Small ribosomal subunit protein uS11c (136 aa).

A disordered region spans residues 1-22; it reads MAKAIPKKGSRGRIGSRKSTRK.

It belongs to the universal ribosomal protein uS11 family. Part of the 30S ribosomal subunit.

The protein localises to the plastid. The protein resides in the chloroplast. The chain is Small ribosomal subunit protein uS11c from Lactuca sativa (Garden lettuce).